A 967-amino-acid polypeptide reads, in one-letter code: Phosphatidylserine decarboxylase proenzyme 3 (967 aa).

The segment at 217–255 (FIAEPDSSIPPSESSVSISTDTGKETPPSKSKKSSNQPY) is disordered. Residues 220 to 237 (EPDSSIPPSESSVSISTD) show a composition bias toward low complexity. Positions 250–373 (SSNQPYVSIG…SSAQVDPETG (124 aa)) constitute a C2 domain. Residues aspartate 343, serine 346, and aspartate 349 each coordinate Ca(2+). Residues 532–544 (DQQATQTPQSPSS) show a composition bias toward low complexity. A disordered region spans residues 532–566 (DQQATQTPQSPSSNEESGPGTPTQTSDQYEDSEDS). Over residues 545-558 (NEESGPGTPTQTSD) the composition is skewed to polar residues. Catalysis depends on charge relay system; for autoendoproteolytic cleavage activity residues aspartate 769, histidine 825, and serine 912. Residue serine 912 is the Schiff-base intermediate with substrate; via pyruvic acid; for decarboxylase activity of the active site. Position 912 is a pyruvic acid (Ser); by autocatalysis (serine 912). Residues 947-967 (IGQKIDPNKPTDAEDHSKSDS) form a disordered region.

This sequence belongs to the phosphatidylserine decarboxylase family. PSD-B subfamily. Eukaryotic type II sub-subfamily. As to quaternary structure, heterodimer of a large membrane-associated beta subunit and a small pyruvoyl-containing alpha subunit. The cofactor is pyruvate. Requires Ca(2+) as cofactor. Is synthesized initially as an inactive proenzyme. Formation of the active enzyme involves a self-maturation process in which the active site pyruvoyl group is generated from an internal serine residue via an autocatalytic post-translational modification. Two non-identical subunits are generated from the proenzyme in this reaction, and the pyruvate is formed at the N-terminus of the alpha chain, which is derived from the carboxyl end of the proenzyme. The autoendoproteolytic cleavage occurs by a canonical serine protease mechanism, in which the side chain hydroxyl group of the serine supplies its oxygen atom to form the C-terminus of the beta chain, while the remainder of the serine residue undergoes an oxidative deamination to produce ammonia and the pyruvoyl prosthetic group on the alpha chain. During this reaction, the Ser that is part of the protease active site of the proenzyme becomes the pyruvoyl prosthetic group, which constitutes an essential element of the active site of the mature decarboxylase.

Its subcellular location is the golgi apparatus membrane. It localises to the endosome membrane. The protein localises to the cytoplasm. The catalysed reaction is a 1,2-diacyl-sn-glycero-3-phospho-L-serine + H(+) = a 1,2-diacyl-sn-glycero-3-phosphoethanolamine + CO2. Its pathway is phospholipid metabolism; phosphatidylethanolamine biosynthesis; phosphatidylethanolamine from CDP-diacylglycerol: step 2/2. In terms of biological role, catalyzes the formation of phosphatidylethanolamine (PtdEtn) from phosphatidylserine (PtdSer). Plays a central role in phospholipid metabolism and in the interorganelle trafficking of phosphatidylserine. Together with psd1 and psd2, responsible for the majority of phosphatidylethanolamine synthesis. The sequence is that of Phosphatidylserine decarboxylase proenzyme 3 from Schizosaccharomyces pombe (strain 972 / ATCC 24843) (Fission yeast).